Here is a 261-residue protein sequence, read N- to C-terminus: Indole-3-glycerol phosphate synthase (261 aa).

This sequence belongs to the TrpC family.

The enzyme catalyses 1-(2-carboxyphenylamino)-1-deoxy-D-ribulose 5-phosphate + H(+) = (1S,2R)-1-C-(indol-3-yl)glycerol 3-phosphate + CO2 + H2O. It participates in amino-acid biosynthesis; L-tryptophan biosynthesis; L-tryptophan from chorismate: step 4/5. The protein is Indole-3-glycerol phosphate synthase of Campylobacter hominis (strain ATCC BAA-381 / DSM 21671 / CCUG 45161 / LMG 19568 / NCTC 13146 / CH001A).